Here is a 397-residue protein sequence, read N- to C-terminus: Phosphoglycerate kinase (397 aa).

Substrate contacts are provided by residues 25 to 27 (DLN), Arg-41, 64 to 67 (HLGR), Arg-118, and Arg-151. ATP-binding positions include Lys-202, Glu-324, and 350 to 353 (GGDT).

It belongs to the phosphoglycerate kinase family. Monomer.

The protein resides in the cytoplasm. It catalyses the reaction (2R)-3-phosphoglycerate + ATP = (2R)-3-phospho-glyceroyl phosphate + ADP. The protein operates within carbohydrate degradation; glycolysis; pyruvate from D-glyceraldehyde 3-phosphate: step 2/5. This chain is Phosphoglycerate kinase, found in Leptothrix cholodnii (strain ATCC 51168 / LMG 8142 / SP-6) (Leptothrix discophora (strain SP-6)).